A 273-amino-acid polypeptide reads, in one-letter code: Orotidine 5'-phosphate decarboxylase (273 aa).

K96 serves as the catalytic Proton donor.

It belongs to the OMP decarboxylase family. Type 2 subfamily.

The catalysed reaction is orotidine 5'-phosphate + H(+) = UMP + CO2. It participates in pyrimidine metabolism; UMP biosynthesis via de novo pathway; UMP from orotate: step 2/2. The polypeptide is Orotidine 5'-phosphate decarboxylase (Nocardioides sp. (strain ATCC BAA-499 / JS614)).